The primary structure comprises 571 residues: Glycine--tRNA ligase (571 aa).

Arg99 and Glu165 together coordinate substrate. Residues Arg197–Glu199, Ile207–Phe212, Glu324–Cys325, and Gly443–Arg446 each bind ATP. Phe212–Glu216 contacts substrate. Position 439 to 443 (Glu439 to Gly443) interacts with substrate.

Belongs to the class-II aminoacyl-tRNA synthetase family.

Its subcellular location is the cytoplasm. It carries out the reaction tRNA(Gly) + glycine + ATP = glycyl-tRNA(Gly) + AMP + diphosphate. In terms of biological role, catalyzes the attachment of glycine to tRNA(Gly). This is Glycine--tRNA ligase from Pyrococcus abyssi (strain GE5 / Orsay).